Consider the following 209-residue polypeptide: PRA1 family protein A3 (209 aa).

A run of 4 helical transmembrane segments spans residues 51 to 72, 76 to 98, 143 to 163, and 164 to 184; these read LYYY…ALIT, AILG…AATF, LVFV…SCGL, and LWVL…ASLR.

This sequence belongs to the PRA1 family.

Its subcellular location is the endosome membrane. Functionally, may be involved in both secretory and endocytic intracellular trafficking in the endosomal/prevacuolar compartments. The sequence is that of PRA1 family protein A3 (PRA1A3) from Arabidopsis thaliana (Mouse-ear cress).